Reading from the N-terminus, the 273-residue chain is Eukaryotic translation initiation factor 3 subunit G-2 (273 aa).

Positions Lys165–Ser193 are disordered. Positions Asp173–Trp183 are enriched in gly residues. Residues Ser193–Pro271 form the RRM domain.

This sequence belongs to the eIF-3 subunit G family. Component of the eukaryotic translation initiation factor 3 (eIF-3) complex. The eIF-3 complex interacts with pix.

It localises to the cytoplasm. Functionally, RNA-binding component of the eukaryotic translation initiation factor 3 (eIF-3) complex, which is involved in protein synthesis of a specialized repertoire of mRNAs and, together with other initiation factors, stimulates binding of mRNA and methionyl-tRNAi to the 40S ribosome. The eIF-3 complex specifically targets and initiates translation of a subset of mRNAs involved in cell proliferation. This subunit can bind 18S rRNA. This Drosophila yakuba (Fruit fly) protein is Eukaryotic translation initiation factor 3 subunit G-2.